Here is a 109-residue protein sequence, read N- to C-terminus: Lipoprotein BsmA (109 aa).

Residues 1 to 24 (MVSRKRNSVIYRFASLLLVLMLSA) form the signal peptide. Cys25 carries N-palmitoyl cysteine lipidation. Cys25 carries S-diacylglycerol cysteine lipidation.

It belongs to the BhsA/McbA family.

The protein resides in the cell membrane. Involved in protection of biofilms against oxidative stress. This is Lipoprotein BsmA (bsmA) from Escherichia coli (strain K12).